A 645-amino-acid polypeptide reads, in one-letter code: 1,4-alpha-glucan branching enzyme GlgB (645 aa).

Residue Asp-309 is the Nucleophile of the active site. Glu-352 acts as the Proton donor in catalysis. Residues 619–645 (VKTRKGSKKQDGSKTKVRSNVTSRGKR) are disordered. The segment covering 636–645 (RSNVTSRGKR) has biased composition (polar residues).

The protein belongs to the glycosyl hydrolase 13 family. GlgB subfamily. Monomer.

It catalyses the reaction Transfers a segment of a (1-&gt;4)-alpha-D-glucan chain to a primary hydroxy group in a similar glucan chain.. It functions in the pathway glycan biosynthesis; glycogen biosynthesis. Its function is as follows. Catalyzes the formation of the alpha-1,6-glucosidic linkages in glycogen by scission of a 1,4-alpha-linked oligosaccharide from growing alpha-1,4-glucan chains and the subsequent attachment of the oligosaccharide to the alpha-1,6 position. This chain is 1,4-alpha-glucan branching enzyme GlgB, found in Bacillus mycoides (strain KBAB4) (Bacillus weihenstephanensis).